The sequence spans 297 residues: uncharacterized protein (297 aa).

4 helical membrane passes run 3–23 (DYIY…LYML), 38–58 (VIHI…MPAL), 103–123 (IEGI…TALL), and 128–148 (YVFL…LLAM).

It localises to the cell membrane. This is an uncharacterized protein from Bacillus subtilis (strain 168).